Consider the following 104-residue polypeptide: Flagellar hook-basal body complex protein FliE (104 aa).

Belongs to the FliE family.

It is found in the bacterial flagellum basal body. This Escherichia coli O6:K15:H31 (strain 536 / UPEC) protein is Flagellar hook-basal body complex protein FliE.